The primary structure comprises 420 residues: D-tagatose-1,6-bisphosphate aldolase subunit GatZ (420 aa).

Belongs to the GatZ/KbaZ family. GatZ subfamily. In terms of assembly, forms a complex with GatY.

It participates in carbohydrate metabolism; D-tagatose 6-phosphate degradation; D-glyceraldehyde 3-phosphate and glycerone phosphate from D-tagatose 6-phosphate: step 2/2. Its function is as follows. Component of the tagatose-1,6-bisphosphate aldolase GatYZ that is required for full activity and stability of the Y subunit. Could have a chaperone-like function for the proper and stable folding of GatY. When expressed alone, GatZ does not show any aldolase activity. Is involved in the catabolism of galactitol. The sequence is that of D-tagatose-1,6-bisphosphate aldolase subunit GatZ from Shigella boydii serotype 18 (strain CDC 3083-94 / BS512).